A 1133-amino-acid polypeptide reads, in one-letter code: Protein TPR3 (1133 aa).

The LisH domain maps to 4–36 (LSRELVFLILQFLDEEKFKETVHKLEQESGFYF). In terms of domain architecture, CTLH spans 34 to 92 (FYFNMKYFEDEVINGNWDEVERYLGGFTKVDDNRYSMKIFFEIRKQKYLEALDKHDRSK). The interval 287–307 (PTTANPSMDYPSGDSDHVSKR) is disordered. WD repeat units lie at residues 348–388 (SQGS…RLVL), 410–449 (DPTVSVNRIIWSPDGTLFGVAYSRHIVQIYSYHGGDDIRQ), 455–496 (AHVG…KQFT), 499–540 (GHEA…SRVD), 543–586 (APGH…VKRT), 590–629 (FRKRSMGVVQFDTTRNRFLAAGDEFLIKIWDMDNTSLLTT), 634–673 (GGLPASPRVRFNKEGTLLAVSTHENGIKILANADGVRLLR), 771–810 (MRTSKISRLIYTNSGVAILALASNAVHLLWKWPRNDRNSS), 837–875 (NPEEAVHCFALSKNDSYVMSASGGKISLFNMMTFKTMTT), 878–918 (PPPP…VKSK), 921–960 (GHSKKITGLAFSNVLNVLVSSGADAQICVWSTDGWDKLKS), and 1014–1053 (ENSSPITHAMFSCDSQLIYASFLDATVCIFNASSLRLQCR). Positions 1099 to 1133 (ESERKWGNPPPAENGSTSALSTPPNGASSSDQPER) are disordered. The segment covering 1112–1133 (NGSTSALSTPPNGASSSDQPER) has biased composition (polar residues).

Tetramer. Interacts with D53. Interacts with MODD and HDAC1. Interacts with WOX1. Interacts with MOF1. Expressed in panicles, stems, leaves, spikelets and seed endosperm.

In terms of biological role, probable downstream regulator of strigolactones signaling. Functions in a complex with MODD and HDAC1 to down-regulate the histone acetylation level at BZIP46 target genes. BZIP46 is a positive regulator of abscisic acid (ABA) signaling and drought stress tolerance. This Oryza sativa subsp. japonica (Rice) protein is Protein TPR3.